A 201-amino-acid chain; its full sequence is Large ribosomal subunit protein uL4 (201 aa).

The segment at 43-73 (SRGQKTRAEVTGSGKKPWRQKGTGRARSGSV) is disordered.

Belongs to the universal ribosomal protein uL4 family. In terms of assembly, part of the 50S ribosomal subunit.

One of the primary rRNA binding proteins, this protein initially binds near the 5'-end of the 23S rRNA. It is important during the early stages of 50S assembly. It makes multiple contacts with different domains of the 23S rRNA in the assembled 50S subunit and ribosome. Functionally, forms part of the polypeptide exit tunnel. The sequence is that of Large ribosomal subunit protein uL4 from Sodalis glossinidius (strain morsitans).